We begin with the raw amino-acid sequence, 365 residues long: Alanine racemase (365 aa).

K35 acts as the Proton acceptor; specific for D-alanine in catalysis. N6-(pyridoxal phosphate)lysine is present on K35. R130 is a binding site for substrate. The active-site Proton acceptor; specific for L-alanine is the Y256. Position 304 (M304) interacts with substrate.

The protein belongs to the alanine racemase family. It depends on pyridoxal 5'-phosphate as a cofactor.

It carries out the reaction L-alanine = D-alanine. The protein operates within amino-acid biosynthesis; D-alanine biosynthesis; D-alanine from L-alanine: step 1/1. Functionally, catalyzes the interconversion of L-alanine and D-alanine. May also act on other amino acids. In Acidovorax ebreus (strain TPSY) (Diaphorobacter sp. (strain TPSY)), this protein is Alanine racemase (alr).